Reading from the N-terminus, the 152-residue chain is B3 domain-containing protein At1g10455 (152 aa).

Positions 24–131 (LKKKLSDSDL…EVKFKHFKSQ (108 aa)) form a DNA-binding region, TF-B3.

Its subcellular location is the nucleus. The polypeptide is B3 domain-containing protein At1g10455 (Arabidopsis thaliana (Mouse-ear cress)).